Consider the following 352-residue polypeptide: Photosystem II D2 protein (352 aa).

Position 2 is an N-acetylthreonine (T2). T2 carries the phosphothreonine modification. A helical membrane pass occupies residues 40-60 (CAYFALGGWLTGTTFVTSWYT). Chlorophyll a is bound at residue H117. A helical membrane pass occupies residues 124-140 (GFMLRQFEIARSVNLRP). 2 residues coordinate pheophytin a: Q129 and N142. Residues 152–165 (VFVSVFLIYPLGQS) traverse the membrane as a helical segment. H197 serves as a coordination point for chlorophyll a. Residues 207 to 227 (AALLCAIHGATVENTLFEDGD) traverse the membrane as a helical segment. H214 and F261 together coordinate a plastoquinone. H214 lines the Fe cation pocket. H268 contributes to the Fe cation binding site. A helical membrane pass occupies residues 278 to 294 (GLWMSAIGVVGLALNLR).

This sequence belongs to the reaction center PufL/M/PsbA/D family. PSII is composed of 1 copy each of membrane proteins PsbA, PsbB, PsbC, PsbD, PsbE, PsbF, PsbH, PsbI, PsbJ, PsbK, PsbL, PsbM, PsbT, PsbX, PsbY, PsbZ, Psb30/Ycf12, at least 3 peripheral proteins of the oxygen-evolving complex and a large number of cofactors. It forms dimeric complexes. The D1/D2 heterodimer binds P680, chlorophylls that are the primary electron donor of PSII, and subsequent electron acceptors. It shares a non-heme iron and each subunit binds pheophytin, quinone, additional chlorophylls, carotenoids and lipids. There is also a Cl(-1) ion associated with D1 and D2, which is required for oxygen evolution. The PSII complex binds additional chlorophylls, carotenoids and specific lipids. is required as a cofactor. Phosphorylated in vitro.

The protein localises to the plastid. It is found in the chloroplast thylakoid membrane. The enzyme catalyses 2 a plastoquinone + 4 hnu + 2 H2O = 2 a plastoquinol + O2. Functionally, photosystem II (PSII) is a light-driven water:plastoquinone oxidoreductase that uses light energy to abstract electrons from H(2)O, generating O(2) and a proton gradient subsequently used for ATP formation. It consists of a core antenna complex that captures photons, and an electron transfer chain that converts photonic excitation into a charge separation. The D1/D2 (PsbA/PsbD) reaction center heterodimer binds P680, the primary electron donor of PSII as well as several subsequent electron acceptors. D2 is needed for assembly of a stable PSII complex. In Chlamydomonas reinhardtii (Chlamydomonas smithii), this protein is Photosystem II D2 protein.